We begin with the raw amino-acid sequence, 970 residues long: m7GpppN-mRNA hydrolase (970 aa).

The 128-residue stretch at 101-228 folds into the Nudix hydrolase domain; it reads KSIPVRGAAI…IKYYLINSMM (128 aa). S116 carries the post-translational modification Phosphoserine. The Nudix box signature appears at 134–155; that stretch reads GKISKDENDIDCCIREVKEEIG. The Mn(2+) site is built by E149 and E153. Over residues 302–314 the composition is skewed to basic and acidic residues; sequence QHLKEQSGEHNQQ. 4 disordered regions span residues 302 to 341, 417 to 465, 501 to 520, and 528 to 692; these read QHLK…ANNK, AVSQ…PKLK, SSQK…NDSV, and YEDF…LSST. The segment covering 315 to 334 has biased composition (low complexity); it reads KDQQSSFSSQQQPSIFPSLS. S439 carries the post-translational modification Phosphoserine. Positions 528–539 are enriched in acidic residues; that stretch reads YEDFESSSDEEV. Residues 560–576 show a composition bias toward basic and acidic residues; the sequence is SEKDSRRSQKEKPRNDA. Residues 577–590 show a composition bias toward polar residues; that stretch reads SKTNLNASAESNSV. The segment covering 596-608 has biased composition (low complexity); it reads KSSPSTQSKQNSS. A compositionally biased stretch (acidic residues) spans 625 to 637; the sequence is DAYEVFESSSDEE. Residue T677 is modified to Phosphothreonine. A compositionally biased stretch (polar residues) spans 677-691; sequence TESNKSINETVGLSS. 6 positions are modified to phosphoserine: S679, S682, S751, S771, S773, and S778. Positions 831-867 are disordered; sequence LKKNDSTGYPRTEGGPSSEMSTSMKRNDATNNQELDK. Residues 848–863 show a composition bias toward polar residues; sequence SEMSTSMKRNDATNNQ.

It belongs to the Nudix hydrolase family. DCP2 subfamily. In terms of assembly, component of the decapping complex composed of DCP1 and DCP2. Interacts with mRNA, LSM2, LSM4 and LSM8. Interacts with EDC3. Mn(2+) serves as cofactor.

The protein localises to the cytoplasm. It localises to the P-body. It carries out the reaction a 5'-end (N(7)-methyl 5'-triphosphoguanosine)-ribonucleoside in mRNA + H2O = N(7)-methyl-GDP + a 5'-end phospho-ribonucleoside in mRNA + 2 H(+). Catalytic component of the decapping complex necessary for the degradation of mRNAs, both in normal mRNA turnover and in nonsense-mediated mRNA decay. Removes the 7-methyl guanine cap structure from mRNA molecules, yielding a 5'-phosphorylated mRNA fragment and 7m-GDP. Decapping is the major pathway of mRNA degradation in yeast and occurs through deadenylation, decapping and subsequent 5' to 3' exonucleolytic decay of the transcript body. Blocks autophagy in nutrient-rich conditions by repressing the expression of ATG-related genes through degradation of their transcripts. The polypeptide is m7GpppN-mRNA hydrolase (Saccharomyces cerevisiae (strain ATCC 204508 / S288c) (Baker's yeast)).